We begin with the raw amino-acid sequence, 86 residues long: RNA-binding protein Hfq (86 aa).

The 62-residue stretch at 12 to 73 folds into the Sm domain; it reads DIFLNQVRKE…ISTITPQKPV (62 aa).

This sequence belongs to the Hfq family. Homohexamer.

RNA chaperone that binds small regulatory RNA (sRNAs) and mRNAs to facilitate mRNA translational regulation in response to envelope stress, environmental stress and changes in metabolite concentrations. Also binds with high specificity to tRNAs. The chain is RNA-binding protein Hfq from Thermoanaerobacter pseudethanolicus (strain ATCC 33223 / 39E) (Clostridium thermohydrosulfuricum).